A 501-amino-acid chain; its full sequence is Beta-secretase 1 (501 aa).

An N-terminal signal peptide occupies residues 1–21 (MAQALPWLLLWMGAGVLPAHG). Positions 22 to 45 (TQHGIRLPLRSGLGGAPLGLRLPR) are excised as a propeptide. Topologically, residues 22–457 (TQHGIRLPLR…PQTDESTLMT (436 aa)) are extracellular. Positions 39 to 58 (LGLRLPRETDEEPEEPGRRG) are disordered. The 342-residue stretch at 75-416 (YYVEMTVGSP…DRARKRIGFA (342 aa)) folds into the Peptidase A1 domain. The active site involves D93. Residue K126 is modified to N6-acetyllysine. N153, N172, and N223 each carry an N-linked (GlcNAc...) asparagine glycan. 3 disulfide bridges follow: C216-C420, C278-C443, and C330-C380. K275, K279, and K285 each carry N6-acetyllysine. The active site involves D289. Residues K299, K300, and K307 each carry the N6-acetyllysine modification. N354 is a glycosylation site (N-linked (GlcNAc...) asparagine). A helical transmembrane segment spans residues 458-478 (IAYVMAAICALFMLPLCLMVC). S-palmitoyl cysteine attachment occurs at residues C474, C478, C482, and C485. Residues 479-501 (QWRCLRCLRQQHDDFADDISLLK) are Cytoplasmic-facing. Residues 479 to 501 (QWRCLRCLRQQHDDFADDISLLK) form an interaction with RTN3 region. Residues 496–500 (DISLL) carry the DXXLL motif. Residue S498 is modified to Phosphoserine. K501 is covalently cross-linked (Glycyl lysine isopeptide (Lys-Gly) (interchain with G-Cter in ubiquitin)).

Belongs to the peptidase A1 family. In terms of assembly, monomer. Interacts (via DXXLL motif) with GGA1, GGA2 and GGA3 (via their VHS domain); the interaction highly increases when BACE1 is phosphorylated at Ser-498. Interacts with RTN1; RTN2; RTN3 and RTN4; the interaction leads to inhibition of amyloid precursor protein processing. Interacts with SNX6. Interacts with PCSK9. Interacts with NAT8 and NAT8B. Interacts with BIN1. Interacts (via extracellular domain) with ADAM10 (via extracellular domain). Interacts with SORL1; this interaction may affect binding with APP and hence reduce APP cleavage. Interacts with NRDC AND NRG1. In terms of processing, N-Glycosylated. Addition of a bisecting N-acetylglucosamine by MGAT3 blocks lysosomal targeting, further degradation and is required for maintaining stability under stress conditions. Acetylated in the endoplasmic reticulum at Lys-126, Lys-275, Lys-279, Lys-285, Lys-299, Lys-300 and Lys-307. Acetylation by NAT8 and NAT8B is transient and deacetylation probably occurs in the Golgi. Acetylation regulates the maturation, the transport to the plasma membrane, the stability and the expression of the protein. Post-translationally, palmitoylation mediates lipid raft localization. In terms of processing, ubiquitinated at Lys-501, ubiquitination leads to lysosomal degradation. Monoubiquitinated and 'Lys-63'-linked polyubitinated. Deubiquitnated by USP8; inhibits lysosomal degradation. Phosphorylation at Ser-498 is required for interaction with GGA1 and retrograded transport from endosomal compartments to the trans-Golgi network. Non-phosphorylated BACE1 enters a direct recycling route to the cell surface. As to expression, expressed at high levels in the brain and pancreas. In the brain, expression is highest in the substantia nigra, locus coruleus and medulla oblongata.

It is found in the cell membrane. The protein localises to the golgi apparatus. The protein resides in the trans-Golgi network. Its subcellular location is the endoplasmic reticulum. It localises to the endosome. It is found in the cell surface. The protein localises to the cytoplasmic vesicle membrane. The protein resides in the membrane raft. Its subcellular location is the lysosome. It localises to the late endosome. It is found in the early endosome. The protein localises to the recycling endosome. The protein resides in the cell projection. Its subcellular location is the axon. It localises to the dendrite. It catalyses the reaction Broad endopeptidase specificity. Cleaves Glu-Val-Asn-Leu-|-Asp-Ala-Glu-Phe in the Swedish variant of Alzheimer's amyloid precursor protein.. With respect to regulation, inhibited by RTN3 and RTN4. Responsible for the proteolytic processing of the amyloid precursor protein (APP). Cleaves at the N-terminus of the A-beta peptide sequence, between residues 671 and 672 of APP, leads to the generation and extracellular release of beta-cleaved soluble APP, and a corresponding cell-associated C-terminal fragment which is later released by gamma-secretase. Cleaves CHL1. The sequence is that of Beta-secretase 1 from Homo sapiens (Human).